Reading from the N-terminus, the 158-residue chain is Transcription elongation factor GreA (158 aa).

Belongs to the GreA/GreB family.

Functionally, necessary for efficient RNA polymerase transcription elongation past template-encoded arresting sites. The arresting sites in DNA have the property of trapping a certain fraction of elongating RNA polymerases that pass through, resulting in locked ternary complexes. Cleavage of the nascent transcript by cleavage factors such as GreA or GreB allows the resumption of elongation from the new 3'terminus. GreA releases sequences of 2 to 3 nucleotides. The protein is Transcription elongation factor GreA of Agrobacterium fabrum (strain C58 / ATCC 33970) (Agrobacterium tumefaciens (strain C58)).